We begin with the raw amino-acid sequence, 131 residues long: Maturin (131 aa).

Residues 107-120 show a composition bias toward acidic residues; it reads FEEYNADVEEEEPE. The disordered stretch occupies residues 107-131; that stretch reads FEEYNADVEEEEPEADHQQMGVSQQ.

The protein belongs to the MTURN family.

The protein resides in the cytoplasm. Functionally, involved in early neuronal development; required for cell cycle exit and differentiation of primary neurons. Cooperates synergistically with pak3 to promote primary neural differentiation within the neural plate. May play a role in promoting megakaryocyte differentiation. The sequence is that of Maturin (mturn) from Xenopus laevis (African clawed frog).